Here is a 450-residue protein sequence, read N- to C-terminus: METKPPIPLAVLVGIQTPDVDDIAHEASLAELGRLVKTLGYAVVGTVSQKREGTGAALLLGSGKLAELAALTGGTGVVTSMAPPPKSKARQRFEGAAEGAAPPEPDPDAARRPEFVIVDHELSPSQIRNLERATGAQVLDRTGVIVEIFHRHANTREARLQVEMARLKYVAPRLRESSGGGGRQQGPGAGESTLALDRRKIRDRLAELKTQLDAVQRDGDQRRSARRDQLRVALVGYTNAGKSSLMRALTGSQVLVEDKLFATLDTTVRILQPETRPRILVSDTVGFIKQLPHDLVASFRSTLAEALEASLLLFVVDASDPTYESQLEVTRGVLREIGADAVPSRLVLNKMDRLDPAARAALRDKHPDAIMLSAHAPGDVSALRDTLIAFFEAEMVEDTLVLPYAKQGLIGEIYESARVLSEDHDETGRVLKVRALPAAITRLKRSLAAR.

Disordered stretches follow at residues 79 to 110 (TSMAPPPKSKARQRFEGAAEGAAPPEPDPDAA) and 173 to 196 (RLRESSGGGGRQQGPGAGESTLAL). Gly residues predominate over residues 178 to 189 (SGGGGRQQGPGA). Residues 230–395 (LRVALVGYTN…TLIAFFEAEM (166 aa)) enclose the Hflx-type G domain. GTP contacts are provided by residues 236–243 (GYTNAGKS), 261–265 (FATLD), 283–286 (DTVG), 349–352 (NKMD), and 373–375 (SAH). 2 residues coordinate Mg(2+): serine 243 and threonine 263.

This sequence belongs to the TRAFAC class OBG-HflX-like GTPase superfamily. HflX GTPase family. As to quaternary structure, monomer. Associates with the 50S ribosomal subunit. Mg(2+) serves as cofactor.

It is found in the cytoplasm. Functionally, GTPase that associates with the 50S ribosomal subunit and may have a role during protein synthesis or ribosome biogenesis. This Gluconacetobacter diazotrophicus (strain ATCC 49037 / DSM 5601 / CCUG 37298 / CIP 103539 / LMG 7603 / PAl5) protein is GTPase HflX.